The following is a 287-amino-acid chain: IQ domain-containing protein K (287 aa).

The polypeptide is IQ domain-containing protein K (IQCK) (Homo sapiens (Human)).